The primary structure comprises 352 residues: Phosphoribosylformylglycinamidine cyclo-ligase (352 aa).

The protein belongs to the AIR synthase family.

The protein localises to the cytoplasm. The enzyme catalyses 2-formamido-N(1)-(5-O-phospho-beta-D-ribosyl)acetamidine + ATP = 5-amino-1-(5-phospho-beta-D-ribosyl)imidazole + ADP + phosphate + H(+). It functions in the pathway purine metabolism; IMP biosynthesis via de novo pathway; 5-amino-1-(5-phospho-D-ribosyl)imidazole from N(2)-formyl-N(1)-(5-phospho-D-ribosyl)glycinamide: step 2/2. This is Phosphoribosylformylglycinamidine cyclo-ligase from Pseudomonas putida (strain W619).